Consider the following 98-residue polypeptide: HssA/B-like protein 36 (98 aa).

Residues 1 to 29 (MTLFSSISSISNPMTSSKSSISSFGSGTS) form a disordered region.

This sequence belongs to the hssA/B family.

The protein is HssA/B-like protein 36 (hssl36) of Dictyostelium discoideum (Social amoeba).